The primary structure comprises 283 residues: 2-dehydro-3-deoxyphosphooctonate aldolase (283 aa).

It belongs to the KdsA family.

It is found in the cytoplasm. The enzyme catalyses D-arabinose 5-phosphate + phosphoenolpyruvate + H2O = 3-deoxy-alpha-D-manno-2-octulosonate-8-phosphate + phosphate. It functions in the pathway carbohydrate biosynthesis; 3-deoxy-D-manno-octulosonate biosynthesis; 3-deoxy-D-manno-octulosonate from D-ribulose 5-phosphate: step 2/3. It participates in bacterial outer membrane biogenesis; lipopolysaccharide biosynthesis. This is 2-dehydro-3-deoxyphosphooctonate aldolase from Methylococcus capsulatus (strain ATCC 33009 / NCIMB 11132 / Bath).